The primary structure comprises 480 residues: tRNA-2-methylthio-N(6)-dimethylallyladenosine synthase (480 aa).

The 117-residue stretch at 29–145 (GSFWIQTFGC…LEALLTQVDN (117 aa)) folds into the MTTase N-terminal domain. 6 residues coordinate [4Fe-4S] cluster: C38, C74, C108, C180, C184, and C187. The Radical SAM core domain maps to 166–403 (RDSTICAWVN…NALVERVALQ (238 aa)). One can recognise a TRAM domain in the interval 406–474 (SRYSGKVEQV…AFSLSGTPCD (69 aa)).

It belongs to the methylthiotransferase family. MiaB subfamily. As to quaternary structure, monomer. [4Fe-4S] cluster is required as a cofactor.

It is found in the cytoplasm. It carries out the reaction N(6)-dimethylallyladenosine(37) in tRNA + (sulfur carrier)-SH + AH2 + 2 S-adenosyl-L-methionine = 2-methylsulfanyl-N(6)-dimethylallyladenosine(37) in tRNA + (sulfur carrier)-H + 5'-deoxyadenosine + L-methionine + A + S-adenosyl-L-homocysteine + 2 H(+). Functionally, catalyzes the methylthiolation of N6-(dimethylallyl)adenosine (i(6)A), leading to the formation of 2-methylthio-N6-(dimethylallyl)adenosine (ms(2)i(6)A) at position 37 in tRNAs that read codons beginning with uridine. The chain is tRNA-2-methylthio-N(6)-dimethylallyladenosine synthase from Prochlorococcus marinus (strain MIT 9303).